Here is a 425-residue protein sequence, read N- to C-terminus: Histone-binding protein RBBP7 (425 aa).

At alanine 2 the chain carries N-acetylalanine. Serine 3 carries the post-translational modification Phosphoserine. N6-acetyllysine; alternate is present on lysine 4. Lysine 4 is covalently cross-linked (Glycyl lysine isopeptide (Lys-Gly) (interchain with G-Cter in SUMO2); alternate). Residue lysine 4 forms a Glycyl lysine isopeptide (Lys-Gly) (interchain with G-Cter in ubiquitin); alternate linkage. Residue threonine 10 is modified to Phosphothreonine. 2 positions are modified to phosphoserine: glutamate 13 and serine 95. WD repeat units follow at residues 47 to 122 (QWLP…KINH), 128 to 173 (RARY…LRLR), 181 to 217 (GLSWNSNLSGHLLSASDDHTVCLWDINAGPKEGKIVD), 228 to 269 (VVED…HLVD), 275 to 312 (VNCLSFNPYSEFILATGSADKTVALWDLRNLKLKLHTF), 318 to 369 (EIFQ…LFIH), and 376 to 403 (ISDFSWNPNEPWVICSVSEDNIMQIWQM). Lysine 101 participates in a covalent cross-link: Glycyl lysine isopeptide (Lys-Gly) (interchain with G-Cter in SUMO2). Position 119 is an N6-acetyllysine (lysine 119). Residue lysine 155 forms a Glycyl lysine isopeptide (Lys-Gly) (interchain with G-Cter in SUMO2) linkage. N6-acetyllysine; alternate is present on lysine 159. Lysine 159 is covalently cross-linked (Glycyl lysine isopeptide (Lys-Gly) (interchain with G-Cter in SUMO2); alternate). Serine 354 bears the Phosphoserine mark.

The protein belongs to the WD repeat RBAP46/RBAP48/MSI1 family. Binds directly to helix 1 of the histone fold of histone H4, a region that is not accessible when H4 is in chromatin. Subunit of the type B histone acetyltransferase (HAT) complex, composed of RBBP7 and HAT1. Subunit of the core histone deacetylase (HDAC) complex, which is composed of HDAC1, HDAC2, RBBP4 and RBBP7. The core HDAC complex associates with SIN3A, ARID4B/SAP180, SAP18, SAP30, SAP130, SUDS3/SAP45 and possibly ARID4A/RBP1 and ING1 to form the SIN3 HDAC complex. Component of the nucleosome remodeling and deacetylase (NuRD) repressor complex, composed of core proteins MTA1, MTA2, MTA3, RBBP4, RBBP7, HDAC1, HDAC2, MBD2, MBD3, and peripherally associated proteins CDK2AP1, CDK2AP2, GATAD2A, GATAD2B, CHD3, CHD4 and CHD5. The exact stoichiometry of the NuRD complex is unknown, and some subunits such as MBD2 and MBD3, GATAD2A and GATAD2B, and CHD3, CHD4 and CHD5 define mutually exclusive NuRD complexes. The NuRD complex may interact with MBD3L1. The NuRD complex may interact with MBD3L2. Subunit of the PRC2/EED-EZH2 complex, which is composed of at least EED, EZH2, RBBP4, RBBP7 and SUZ12. The PRC2/EED-EZH2 complex may also associate with HDAC1. Component of the NURF-1 ISWI chromatin remodeling complex (also called the nucleosome-remodeling factor (NURF) complex) at least composed of SMARCA1 (isoform 2), BPTF, RBBP4 and RBBP7. Within the complex interacts with isoform 2 of SMARCA1. Component of the BPFT-SMARCA1 complex at least composed of SMARCA1 (isoform 1), BPFT, RBBP4 and RBBP7; the complex is catalytically inactive and does not remodel chromatin. Within the complex interacts with isoform 1 of SMARCA1. Interacts with BRCA1. Interacts with CDK2AP1. Interacts with CENPA. Interacts with CHD3. Interacts with CHD4. Interacts with CREBBP, and this interaction may be enhanced by the binding of phosphorylated CREB1 to CREBBP. Interacts with HDAC7. Interacts with MTA1. Interacts with PWWP2B. Interacts with RB1 (via viral protein-binding domain). Interacts with SUV39H1.

It is found in the nucleus. Functionally, core histone-binding subunit that may target chromatin remodeling factors, histone acetyltransferases and histone deacetylases to their histone substrates in a manner that is regulated by nucleosomal DNA. Component of several complexes which regulate chromatin metabolism. These include the type B histone acetyltransferase (HAT) complex, which is required for chromatin assembly following DNA replication; the core histone deacetylase (HDAC) complex, which promotes histone deacetylation and consequent transcriptional repression; the nucleosome remodeling and histone deacetylase complex (the NuRD complex), which promotes transcriptional repression by histone deacetylation and nucleosome remodeling; and the PRC2/EED-EZH2 complex, which promotes repression of homeotic genes during development; and the NURF (nucleosome remodeling factor) complex. The chain is Histone-binding protein RBBP7 (RBBP7) from Homo sapiens (Human).